A 203-amino-acid polypeptide reads, in one-letter code: Nucleoside triphosphate pyrophosphatase (203 aa).

Asp80 functions as the Proton acceptor in the catalytic mechanism.

This sequence belongs to the Maf family. A divalent metal cation is required as a cofactor.

It localises to the cytoplasm. It catalyses the reaction a ribonucleoside 5'-triphosphate + H2O = a ribonucleoside 5'-phosphate + diphosphate + H(+). The catalysed reaction is a 2'-deoxyribonucleoside 5'-triphosphate + H2O = a 2'-deoxyribonucleoside 5'-phosphate + diphosphate + H(+). Its function is as follows. Nucleoside triphosphate pyrophosphatase. May have a dual role in cell division arrest and in preventing the incorporation of modified nucleotides into cellular nucleic acids. The sequence is that of Nucleoside triphosphate pyrophosphatase from Gluconobacter oxydans (strain 621H) (Gluconobacter suboxydans).